The sequence spans 161 residues: Arginine repressor (161 aa).

Belongs to the ArgR family.

The protein resides in the cytoplasm. It functions in the pathway amino-acid biosynthesis; L-arginine biosynthesis [regulation]. Functionally, regulates arginine biosynthesis genes. The polypeptide is Arginine repressor (Corynebacterium aurimucosum (strain ATCC 700975 / DSM 44827 / CIP 107346 / CN-1) (Corynebacterium nigricans)).